A 210-amino-acid polypeptide reads, in one-letter code: Outer-membrane lipoprotein LolB (210 aa).

A signal peptide spans 1–29; that stretch reads MSLISNNEERSLRVRYCIAIALSALLISG. Cysteine 30 is lipidated: N-palmitoyl cysteine. Cysteine 30 is lipidated: S-diacylglycerol cysteine.

This sequence belongs to the LolB family. In terms of assembly, monomer.

It is found in the cell outer membrane. Its function is as follows. Plays a critical role in the incorporation of lipoproteins in the outer membrane after they are released by the LolA protein. The protein is Outer-membrane lipoprotein LolB of Coxiella burnetii (strain CbuK_Q154) (Coxiella burnetii (strain Q154)).